Reading from the N-terminus, the 282-residue chain is D-arabinitol 2-dehydrogenase [ribulose-forming] (282 aa).

The NADP(+) site is built by leucine 32 and asparagine 53. Serine 170 serves as the catalytic Proton donor. Residues tyrosine 185, lysine 189, isoleucine 218, and threonine 220 each coordinate NADP(+). The Proton acceptor role is filled by tyrosine 185. Lysine 189 functions as the Lowers pKa of active site Tyr in the catalytic mechanism.

Belongs to the short-chain dehydrogenases/reductases (SDR) family.

The catalysed reaction is D-arabinitol + NAD(+) = D-ribulose + NADH + H(+). It participates in carbohydrate metabolism; D-arabinitol metabolism. Catalyzes the NAD(+)-dependent oxidation of D-arabinitol at carbon 4 to produce D-ribulose. This chain is D-arabinitol 2-dehydrogenase [ribulose-forming] (ARD), found in Candida tropicalis (Yeast).